The sequence spans 81 residues: Cytotoxin 2 (81 aa).

A signal peptide spans 1-21 (MKTLLLTLVVVTIVCLDLGYT). Cystine bridges form between Cys24–Cys42, Cys35–Cys59, Cys63–Cys74, and Cys75–Cys80.

Belongs to the three-finger toxin family. Short-chain subfamily. Type IA cytotoxin sub-subfamily. In terms of assembly, monomer in solution; Homodimer and oligomer in the presence of negatively charged lipids forming a pore with a size ranging between 20 and 30 Angstroms. In terms of tissue distribution, expressed by the venom gland.

The protein localises to the secreted. Its subcellular location is the target cell membrane. Its function is as follows. Shows cytolytic activity on many different cells by forming pore in lipid membranes. In vivo, increases heart rate or kills the animal by cardiac arrest. In addition, it binds to heparin with high affinity, interacts with Kv channel-interacting protein 1 (KCNIP1) in a calcium-independent manner, and binds to integrin alpha-V/beta-3 (ITGAV/ITGB3) with moderate affinity. The sequence is that of Cytotoxin 2 from Naja kaouthia (Monocled cobra).